The primary structure comprises 492 residues: GTPase Der (492 aa).

EngA-type G domains lie at 3-166 (PVVA…MDDV) and 205-378 (IKLA…DSST). GTP is bound by residues 9–16 (GRPNVGKS), 56–60 (DTGGI), 118–121 (NKTD), 211–218 (GRPNVGKS), 258–262 (DTAGV), and 323–326 (NKWD). One can recognise a KH-like domain in the interval 379 to 463 (RRVSTALLTR…PIRIQFKEGA (85 aa)).

It belongs to the TRAFAC class TrmE-Era-EngA-EngB-Septin-like GTPase superfamily. EngA (Der) GTPase family. Associates with the 50S ribosomal subunit.

Its function is as follows. GTPase that plays an essential role in the late steps of ribosome biogenesis. This Cronobacter sakazakii (strain ATCC BAA-894) (Enterobacter sakazakii) protein is GTPase Der.